We begin with the raw amino-acid sequence, 250 residues long: Small ribosomal subunit protein uS3 (250 aa).

The KH type-2 domain maps to 39-107; the sequence is VRAALKKRLY…EVHLNIVEIR (69 aa). The interval 215-250 is disordered; sequence LDKRLATESGPAGEGGGRERGDRPDRGDRRDRRDRA. Over residues 230–250 the composition is skewed to basic and acidic residues; it reads GGRERGDRPDRGDRRDRRDRA.

Belongs to the universal ribosomal protein uS3 family. As to quaternary structure, part of the 30S ribosomal subunit. Forms a tight complex with proteins S10 and S14.

Its function is as follows. Binds the lower part of the 30S subunit head. Binds mRNA in the 70S ribosome, positioning it for translation. The chain is Small ribosomal subunit protein uS3 from Caulobacter vibrioides (strain ATCC 19089 / CIP 103742 / CB 15) (Caulobacter crescentus).